Reading from the N-terminus, the 322-residue chain is Apolipoprotein E (322 aa).

Residues 1–18 form the signal peptide; sequence MKVLWAALLVAFLAGCQG. Tandem repeats lie at residues 84–105, 106–127, 128–149, 150–171, 172–193, 194–215, 216–238, and 239–260. Residues 84-260 are 8 X 22 AA approximate tandem repeats; sequence ALMDETMKEL…RLDEVKEQVE (177 aa). Methionine 147 carries the post-translational modification Methionine sulfoxide. At serine 151 the chain carries Phosphoserine. The tract at residues 162-172 is LDL and other lipoprotein receptors binding; that stretch reads HLRKLRKRLLR. Residue 166 to 169 participates in heparin binding; it reads LRKR. Positions 214–295 are lipid-binding and lipoprotein association; the sequence is AATVGSSLAG…SWFEPLVEDM (82 aa). Threonine 216 is a glycosylation site (O-linked (GalNAc...) threonine). Heparin is bound at residue 234 to 241; sequence GERLRARM. Residues 271–322 are homooligomerization; sequence QQMRLQAEAFQARLKSWFEPLVEDMQRQWAGLVEKVQAAVGASAAPVPGDNH. Residues 283-295 are specificity for association with VLDL; sequence RLKSWFEPLVEDM.

This sequence belongs to the apolipoprotein A1/A4/E family. As to quaternary structure, homotetramer. May interact with ABCA1; functionally associated with ABCA1 in the biogenesis of HDLs. May interact with APP/A4 amyloid-beta peptide; the interaction is extremely stable in vitro but its physiological significance is unclear. May interact with MAPT. May interact with MAP2. In the cerebrospinal fluid, interacts with secreted SORL1. Interacts with PMEL; this allows the loading of PMEL luminal fragment on ILVs to induce fibril nucleation. In terms of processing, APOE exists as multiple glycosylated and sialylated glycoforms within cells and in plasma. The extent of glycosylation and sialylation are tissue and context specific. Post-translationally, glycated in plasma VLDL. Phosphorylated by FAM20C in the extracellular medium.

It localises to the secreted. It is found in the extracellular space. The protein localises to the extracellular matrix. Its subcellular location is the extracellular vesicle. The protein resides in the endosome. It localises to the multivesicular body. In terms of biological role, APOE is an apolipoprotein, a protein associating with lipid particles, that mainly functions in lipoprotein-mediated lipid transport between organs via the plasma and interstitial fluids. APOE is a core component of plasma lipoproteins and is involved in their production, conversion and clearance. Apolipoproteins are amphipathic molecules that interact both with lipids of the lipoprotein particle core and the aqueous environment of the plasma. As such, APOE associates with chylomicrons, chylomicron remnants, very low density lipoproteins (VLDL) and intermediate density lipoproteins (IDL) but shows a preferential binding to high-density lipoproteins (HDL). It also binds a wide range of cellular receptors including the LDL receptor/LDLR, the LDL receptor-related proteins LRP1, LRP2 and LRP8 and the very low-density lipoprotein receptor/VLDLR that mediate the cellular uptake of the APOE-containing lipoprotein particles. Finally, APOE also has a heparin-binding activity and binds heparan-sulfate proteoglycans on the surface of cells, a property that supports the capture and the receptor-mediated uptake of APOE-containing lipoproteins by cells. A main function of APOE is to mediate lipoprotein clearance through the uptake of chylomicrons, VLDLs, and HDLs by hepatocytes. APOE is also involved in the biosynthesis by the liver of VLDLs as well as their uptake by peripheral tissues ensuring the delivery of triglycerides and energy storage in muscle, heart and adipose tissues. By participating in the lipoprotein-mediated distribution of lipids among tissues, APOE plays a critical role in plasma and tissues lipid homeostasis. APOE is also involved in two steps of reverse cholesterol transport, the HDLs-mediated transport of cholesterol from peripheral tissues to the liver, and thereby plays an important role in cholesterol homeostasis. First, it is functionally associated with ABCA1 in the biogenesis of HDLs in tissues. Second, it is enriched in circulating HDLs and mediates their uptake by hepatocytes. APOE also plays an important role in lipid transport in the central nervous system, regulating neuron survival and sprouting. The chain is Apolipoprotein E (APOE) from Ateles geoffroyi (Black-handed spider monkey).